Reading from the N-terminus, the 213-residue chain is Peptide methionine sulfoxide reductase MsrA (213 aa).

C52 is a catalytic residue.

It belongs to the MsrA Met sulfoxide reductase family.

The enzyme catalyses L-methionyl-[protein] + [thioredoxin]-disulfide + H2O = L-methionyl-(S)-S-oxide-[protein] + [thioredoxin]-dithiol. It carries out the reaction [thioredoxin]-disulfide + L-methionine + H2O = L-methionine (S)-S-oxide + [thioredoxin]-dithiol. Functionally, has an important function as a repair enzyme for proteins that have been inactivated by oxidation. Catalyzes the reversible oxidation-reduction of methionine sulfoxide in proteins to methionine. This Enterobacter sp. (strain 638) protein is Peptide methionine sulfoxide reductase MsrA.